The following is a 183-amino-acid chain: TATA-box-binding protein (183 aa).

Tandem repeats lie at residues 8 to 84 (VENI…VDKI) and 99 to 175 (IQNI…KERL).

It belongs to the TBP family.

In terms of biological role, general factor that plays a role in the activation of archaeal genes transcribed by RNA polymerase. Binds specifically to the TATA box promoter element which lies close to the position of transcription initiation. The sequence is that of TATA-box-binding protein from Methanosphaera stadtmanae (strain ATCC 43021 / DSM 3091 / JCM 11832 / MCB-3).